The following is a 223-amino-acid chain: MIQTTFPDRAVMAELLAKMLWEIKAVHFNAAQPYKLASGMASPVYIDCRKLLSFPRIRSTVMDFAASTLLRDAGFEQFDCIAGGETAGIPFAALLADRLGLPMIYVRKQPKGHGRNAQIEGNMPEGSRVLVIEDLTTAGGSMFKFIDAVRAAGGIVDHGIALFFYGIFGEQRFADGKVRLHHIATWRNVLPSPGSRSSSTTRRCRKSSPSSMRRWLGRERMVA.

5-phospho-alpha-D-ribose 1-diphosphate contacts are provided by residues arginine 107, lysine 108, lysine 111, histidine 113, and 133-141 (EDLTTAGGS). Position 137 (threonine 137) interacts with orotate. Residues 192-211 (SPGSRSSSTTRRCRKSSPSS) show a composition bias toward low complexity. The segment at 192–212 (SPGSRSSSTTRRCRKSSPSSM) is disordered.

Belongs to the purine/pyrimidine phosphoribosyltransferase family. PyrE subfamily. Homodimer. The cofactor is Mg(2+).

It carries out the reaction orotidine 5'-phosphate + diphosphate = orotate + 5-phospho-alpha-D-ribose 1-diphosphate. The protein operates within pyrimidine metabolism; UMP biosynthesis via de novo pathway; UMP from orotate: step 1/2. Functionally, catalyzes the transfer of a ribosyl phosphate group from 5-phosphoribose 1-diphosphate to orotate, leading to the formation of orotidine monophosphate (OMP). This chain is Orotate phosphoribosyltransferase (pyrE), found in Rhizobium leguminosarum bv. trifolii.